A 245-amino-acid chain; its full sequence is Thiopurine S-methyltransferase (245 aa).

29-40 (WQDKWVSHKIGF) provides a ligand contact to S-adenosyl-L-methionine. Phe-40 is a substrate binding site. An N6-acetyllysine modification is found at Lys-58. Residues Leu-69, Glu-90, 134–135 (SI), and Arg-152 contribute to the S-adenosyl-L-methionine site.

This sequence belongs to the class I-like SAM-binding methyltransferase superfamily. TPMT family. As to quaternary structure, monomer.

The protein localises to the cytoplasm. The enzyme catalyses S-adenosyl-L-methionine + a thiopurine = S-adenosyl-L-homocysteine + a thiopurine S-methylether.. The chain is Thiopurine S-methyltransferase (TPMT) from Oryctolagus cuniculus (Rabbit).